We begin with the raw amino-acid sequence, 356 residues long: 5-formaminoimidazole-4-carboxamide-1-(beta)-D-ribofuranosyl 5'-monophosphate synthetase 2 (356 aa).

His27 and Ser94 together coordinate 5-amino-1-(5-phospho-beta-D-ribosyl)imidazole-4-carboxamide. An ATP-grasp domain is found at 101-333 (RENFTGMAVP…YSDLMQKRLS (233 aa)). Residues 145–196 (PHDI…TRYD) and Glu226 each bind ATP. Residue Asn255 participates in 5-amino-1-(5-phospho-beta-D-ribosyl)imidazole-4-carboxamide binding. Positions 293 and 306 each coordinate Mg(2+).

Belongs to the phosphohexose mutase family. It depends on Mg(2+) as a cofactor. Requires Mn(2+) as cofactor.

The catalysed reaction is 5-amino-1-(5-phospho-beta-D-ribosyl)imidazole-4-carboxamide + formate + ATP = 5-formamido-1-(5-phospho-D-ribosyl)imidazole-4-carboxamide + ADP + phosphate. Its pathway is purine metabolism; IMP biosynthesis via de novo pathway; 5-formamido-1-(5-phospho-D-ribosyl)imidazole-4-carboxamide from 5-amino-1-(5-phospho-D-ribosyl)imidazole-4-carboxamide (formate route): step 1/1. In terms of biological role, catalyzes the ATP- and formate-dependent formylation of 5-aminoimidazole-4-carboxamide-1-beta-d-ribofuranosyl 5'-monophosphate (AICAR) to 5-formaminoimidazole-4-carboxamide-1-beta-d-ribofuranosyl 5'-monophosphate (FAICAR) in the absence of folates. This is 5-formaminoimidazole-4-carboxamide-1-(beta)-D-ribofuranosyl 5'-monophosphate synthetase 2 from Methanosarcina mazei (strain ATCC BAA-159 / DSM 3647 / Goe1 / Go1 / JCM 11833 / OCM 88) (Methanosarcina frisia).